The following is a 327-amino-acid chain: GMP reductase (327 aa).

Cys-175 acts as the Thioimidate intermediate in catalysis. NADP(+) is bound at residue 204–227 (IIADGGIRTHGDIAKSVRFGASMV).

This sequence belongs to the IMPDH/GMPR family. GuaC type 2 subfamily.

It carries out the reaction IMP + NH4(+) + NADP(+) = GMP + NADPH + 2 H(+). Catalyzes the irreversible NADPH-dependent deamination of GMP to IMP. It functions in the conversion of nucleobase, nucleoside and nucleotide derivatives of G to A nucleotides, and in maintaining the intracellular balance of A and G nucleotides. The sequence is that of GMP reductase from Lysinibacillus sphaericus (strain C3-41).